The following is a 78-amino-acid chain: Large ribosomal subunit protein bL28 (78 aa).

The segment at 1–21 (MSRVCQVTGKKPMVGNNRSHA) is disordered.

It belongs to the bacterial ribosomal protein bL28 family.

In Shewanella woodyi (strain ATCC 51908 / MS32), this protein is Large ribosomal subunit protein bL28.